The primary structure comprises 268 residues: UPF0328 protein ECU10_1850 (268 aa).

This sequence belongs to the UPF0328 family.

This is UPF0328 protein ECU10_1850 from Encephalitozoon cuniculi (strain GB-M1) (Microsporidian parasite).